Here is a 671-residue protein sequence, read N- to C-terminus: Zinc finger protein 750 (671 aa).

The CCHC-type zinc finger occupies 25–51 (YKCFQCPFTCNEKSHLFNHMKYGLCKN). Zn(2+) contacts are provided by cysteine 27, cysteine 30, histidine 43, and cysteine 49. Disordered stretches follow at residues 66 to 87 (PKVN…SPVP), 366 to 433 (ETSP…KDFT), and 592 to 671 (SSPG…PRVS). Composition is skewed to polar residues over residues 67 to 78 (KVNSTDQKQPSN) and 402 to 412 (SPTNFTQNSQG).

The protein localises to the nucleus. Functionally, transcription factor involved in epidermis differentiation. The chain is Zinc finger protein 750 (znf750) from Xenopus tropicalis (Western clawed frog).